Reading from the N-terminus, the 251-residue chain is Imidazole glycerol phosphate synthase subunit HisF (251 aa).

Active-site residues include D11 and D130.

This sequence belongs to the HisA/HisF family. As to quaternary structure, heterodimer of HisH and HisF.

It is found in the cytoplasm. The enzyme catalyses 5-[(5-phospho-1-deoxy-D-ribulos-1-ylimino)methylamino]-1-(5-phospho-beta-D-ribosyl)imidazole-4-carboxamide + L-glutamine = D-erythro-1-(imidazol-4-yl)glycerol 3-phosphate + 5-amino-1-(5-phospho-beta-D-ribosyl)imidazole-4-carboxamide + L-glutamate + H(+). It functions in the pathway amino-acid biosynthesis; L-histidine biosynthesis; L-histidine from 5-phospho-alpha-D-ribose 1-diphosphate: step 5/9. Functionally, IGPS catalyzes the conversion of PRFAR and glutamine to IGP, AICAR and glutamate. The HisF subunit catalyzes the cyclization activity that produces IGP and AICAR from PRFAR using the ammonia provided by the HisH subunit. This is Imidazole glycerol phosphate synthase subunit HisF from Natranaerobius thermophilus (strain ATCC BAA-1301 / DSM 18059 / JW/NM-WN-LF).